Consider the following 425-residue polypeptide: MLELRFIRENLDLVQERCNRRGMSDELITSFTEIDQKRLSTLAEVESLKNKRNVASKEIAELKRGTDEQKLEAEPLILEMRQIGDKIKILDTSLNQIQEDLDKVVMAIPNLCQDDVPVGNSDEENIELRVWGKKPEFTFTPKAHYELGEEADTIDFERAAKISGARFAILKGFASRLDRALTNFMLDLHTQKHGYTEVLPPFLVNSASLTATGQLPKFKEDLFAIKDWDLYLIPTAEVPVTNIHRDETIAEQDLPIKYTAFTPCFRSEAGSHGRDTRGLVRQHQFNKVELVKFTTPERSTDELESLLGDAEEVLQLLGLHYRVVKLCTGDLGFSSSKTYDIEVWLPGQQKYREISSCSNFLDFQARRGGIRYRPEGQKKSKLVHTLNGSGLAVGRTLLAVMENYQQEDGSITIPEVLKPYFENRF.

Position 235 to 237 (235 to 237 (TAE)) interacts with L-serine. 266–268 (RSE) serves as a coordination point for ATP. Residue glutamate 289 participates in L-serine binding. Position 353–356 (353–356 (EISS)) interacts with ATP. Serine 389 is an L-serine binding site.

The protein belongs to the class-II aminoacyl-tRNA synthetase family. Type-1 seryl-tRNA synthetase subfamily. Homodimer. The tRNA molecule binds across the dimer.

Its subcellular location is the cytoplasm. It catalyses the reaction tRNA(Ser) + L-serine + ATP = L-seryl-tRNA(Ser) + AMP + diphosphate + H(+). The catalysed reaction is tRNA(Sec) + L-serine + ATP = L-seryl-tRNA(Sec) + AMP + diphosphate + H(+). The protein operates within aminoacyl-tRNA biosynthesis; selenocysteinyl-tRNA(Sec) biosynthesis; L-seryl-tRNA(Sec) from L-serine and tRNA(Sec): step 1/1. Catalyzes the attachment of serine to tRNA(Ser). Is also able to aminoacylate tRNA(Sec) with serine, to form the misacylated tRNA L-seryl-tRNA(Sec), which will be further converted into selenocysteinyl-tRNA(Sec). In Desulfotalea psychrophila (strain LSv54 / DSM 12343), this protein is Serine--tRNA ligase.